Consider the following 569-residue polypeptide: Probable protein phosphatase 2C BIPP2C1 (569 aa).

2 disordered regions span residues Gly166–Val212 and Ser251–Ile279. Over residues Ser174 to Gly183 the composition is skewed to low complexity. A PPM-type phosphatase domain is found at Ala329–Val564. Positions 358, 359, 488, and 555 each coordinate Mn(2+).

This sequence belongs to the PP2C family. Mg(2+) is required as a cofactor. Requires Mn(2+) as cofactor.

The enzyme catalyses O-phospho-L-seryl-[protein] + H2O = L-seryl-[protein] + phosphate. It catalyses the reaction O-phospho-L-threonyl-[protein] + H2O = L-threonyl-[protein] + phosphate. May play a role in responses to biotic and abiotic stresses. The chain is Probable protein phosphatase 2C BIPP2C1 (BIPP2C1) from Oryza sativa subsp. indica (Rice).